The sequence spans 30 residues: Babycurus-toxin 1 (30 aa).

Residues 2–30 (KDGYPTNSKGCKISGCLPGENKFCLNECQ) form the LCN-type CS-alpha/beta domain.

Belongs to the long (4 C-C) scorpion toxin superfamily. Sodium channel inhibitor family. Expressed by the venom gland.

Its subcellular location is the secreted. Binds to sodium channels (Nav) and inhibits both the activation and inactivation of the activated channels, thereby blocking neuronal transmission. The protein is Babycurus-toxin 1 of Babycurus centrurimorphus (East African scorpion).